Reading from the N-terminus, the 135-residue chain is UPF0355 protein SAV0387 (135 aa).

The protein belongs to the UPF0355 family.

The polypeptide is UPF0355 protein SAV0387 (Staphylococcus aureus (strain Mu50 / ATCC 700699)).